We begin with the raw amino-acid sequence, 736 residues long: Polyribonucleotide nucleotidyltransferase (736 aa).

Mg(2+) is bound by residues Asp-506 and Asp-512. The region spanning 573-632 (PRLTTIQVPVDAIGLIIGKGGETIRSITEETGAEINIEDDGTVTIACSSVEGTHAALATI) is the KH domain. In terms of domain architecture, S1 motif spans 642-717 (GTIYLGKVRD…GKTRFALSMR (76 aa)).

It belongs to the polyribonucleotide nucleotidyltransferase family. Mg(2+) is required as a cofactor.

Its subcellular location is the cytoplasm. It catalyses the reaction RNA(n+1) + phosphate = RNA(n) + a ribonucleoside 5'-diphosphate. Its function is as follows. Involved in mRNA degradation. Catalyzes the phosphorolysis of single-stranded polyribonucleotides processively in the 3'- to 5'-direction. This Chlorobium limicola (strain DSM 245 / NBRC 103803 / 6330) protein is Polyribonucleotide nucleotidyltransferase.